We begin with the raw amino-acid sequence, 416 residues long: Proline-serine-threonine phosphatase-interacting protein 1 (416 aa).

The F-BAR domain maps to 5-264 (LQFKDAFWCR…TLEGCSIDAD (260 aa)). Residues 166 to 212 (HQKQVEKSQNKARQCKDSATEAERVYRQSIAQLEKVRAEWEQEHRTT) are a coiled coil. A Phosphoserine modification is found at Ser318. Tyr345 is modified (phosphotyrosine). The SH3 domain maps to 359–416 (SPAQEYRALYDYTAQNPDELDLSAGDILEVILEGEDGWWTVERNGQRGFVPGSYLEKL).

As to quaternary structure, homodimer. Homotrimer. Interacts (via coiled-coil domain) with CD2AP, PTPN12 and PTPN18. Interacts (via SH3 domain) with ABL1 and WAS. Interacts (via SH3 and coiled-coil domains) with MEFV (via B-box zinc finger); the interaction allows binding of MEFV to PYCARD and facilitates formation of PYCARD pyroptosomes. Interacts with CD2, DNM2 and FASLG. Dephosphorylated on Tyr-345 by PTPN18, this event negatively regulates the association of PSTPIP1 with SH2 domain-containing proteins as tyrosine kinase. Phosphorylation of Tyr-345 is probably required for subsequent phosphorylation at other tyrosine residues. Phosphorylation is induced by activation of the EGFR and PDGFR in a ABL1 dependent manner. The phosphorylation regulates the interaction with WAS and with MEFV. In terms of tissue distribution, highly expressed in the peripheral blood leukocytes, granulocytes and monocytes, namely in T-cells and natural killer cells, and in spleen. Weakly expressed in the thymus, small intestine, lung and placenta.

The protein localises to the cytoplasm. The protein resides in the cell membrane. It localises to the cell projection. Its subcellular location is the uropodium. It is found in the cytoskeleton. The protein localises to the perinuclear region. The protein resides in the lamellipodium. It localises to the cleavage furrow. In terms of biological role, involved in regulation of the actin cytoskeleton. May regulate WAS actin-bundling activity. Bridges the interaction between ABL1 and PTPN18 leading to ABL1 dephosphorylation. May play a role as a scaffold protein between PTPN12 and WAS and allow PTPN12 to dephosphorylate WAS. Has the potential to physically couple CD2 and CD2AP to WAS. Acts downstream of CD2 and CD2AP to recruit WAS to the T-cell:APC contact site so as to promote the actin polymerization required for synapse induction during T-cell activation. Down-regulates CD2-stimulated adhesion through the coupling of PTPN12 to CD2. Also has a role in innate immunity and the inflammatory response. Recruited to inflammasomes by MEFV. Induces formation of pyroptosomes, large supramolecular structures composed of oligomerized PYCARD dimers which form prior to inflammatory apoptosis. Binding to MEFV allows MEFV to bind to PYCARD and facilitates pyroptosome formation. Regulates endocytosis and cell migration in neutrophils. The sequence is that of Proline-serine-threonine phosphatase-interacting protein 1 (PSTPIP1) from Homo sapiens (Human).